We begin with the raw amino-acid sequence, 190 residues long: Signal peptidase complex subunit 3 (190 aa).

Residues Met-1 to Gln-9 lie on the Cytoplasmic side of the membrane. The helical; Signal-anchor for type II membrane protein transmembrane segment at Tyr-10 to Leu-32 threads the bilayer. Residues Gln-33–Lys-190 are Lumenal-facing.

The protein belongs to the SPCS3 family. In terms of assembly, component of the signal peptidase complex (SPC) composed of a catalytic subunit SEC11 and three accessory subunits SPC1, SPC2 and SPC3. The complex induces a local thinning of the ER membrane which is used to measure the length of the signal peptide (SP) h-region of protein substrates. This ensures the selectivity of the complex towards h-regions shorter than 18-20 amino acids. SPC associates with the translocon complex.

The protein localises to the endoplasmic reticulum membrane. Functionally, essential component of the signal peptidase complex (SPC) which catalyzes the cleavage of N-terminal signal sequences from nascent proteins as they are translocated into the lumen of the endoplasmic reticulum. Essential for the SPC catalytic activity, possibly by stabilizing and positioning the active center of the complex close to the lumenal surface. Essential for viability. In Debaryomyces hansenii (strain ATCC 36239 / CBS 767 / BCRC 21394 / JCM 1990 / NBRC 0083 / IGC 2968) (Yeast), this protein is Signal peptidase complex subunit 3 (SPC3).